Consider the following 1237-residue polypeptide: Clustered mitochondria protein homolog (1237 aa).

In terms of domain architecture, Clu spans 291–535 (DITRSQENCL…RITPLDVAWS (245 aa)). Basic and acidic residues-rich tracts occupy residues 575-597 (RKTAKREAEKTKAVEAQNEDKAE) and 845-854 (SQIKSQEHSP). Disordered stretches follow at residues 575 to 614 (RKTAKREAEKTKAVEAQNEDKAELLSTSDPGEGENKAVAS) and 845 to 886 (SQIK…VAAS). 3 TPR repeats span residues 957 to 990 (AKLYHQLSMLYYQTDEKEAAVELARKAVIVTERT), 999 to 1032 (ILSYLNLSLFEHASGNTHTALIYIRHALELWKII), and 1041 to 1074 (ITTMNNAAVMLQHLKKYPDSRKWFEASLTVCEGL). 2 disordered regions span residues 1152 to 1189 (RLRRTNLSPRMTIGTKPQPQVGQNAPATTNGATSKSIG) and 1201 to 1237 (FIEGGGESRSPRSKQKKRAAASNPKLRGSKQSTVQTA). A compositionally biased stretch (polar residues) spans 1156–1187 (TNLSPRMTIGTKPQPQVGQNAPATTNGATSKS).

This sequence belongs to the CLU family. May associate with the eukaryotic translation initiation factor 3 (eIF-3) complex.

It localises to the cytoplasm. In terms of biological role, mRNA-binding protein involved in proper cytoplasmic distribution of mitochondria. The polypeptide is Clustered mitochondria protein homolog (Ajellomyces capsulatus (strain NAm1 / WU24) (Darling's disease fungus)).